We begin with the raw amino-acid sequence, 447 residues long: Tubulin alpha-2 chain (447 aa).

The GTP site is built by Gln-11, Glu-71, Gly-144, Thr-145, Thr-179, Asn-206, and Asn-228. Glu-71 contacts Mg(2+). Glu-254 is an active-site residue.

Belongs to the tubulin family. As to quaternary structure, dimer of alpha and beta chains. A typical microtubule is a hollow water-filled tube with an outer diameter of 25 nm and an inner diameter of 15 nM. Alpha-beta heterodimers associate head-to-tail to form protofilaments running lengthwise along the microtubule wall with the beta-tubulin subunit facing the microtubule plus end conferring a structural polarity. Microtubules usually have 13 protofilaments but different protofilament numbers can be found in some organisms and specialized cells. The cofactor is Mg(2+). Undergoes a tyrosination/detyrosination cycle, the cyclic removal and re-addition of a C-terminal tyrosine residue by the enzymes tubulin tyrosine carboxypeptidase (TTCP) and tubulin tyrosine ligase (TTL), respectively.

The protein resides in the cytoplasm. Its subcellular location is the cytoskeleton. The catalysed reaction is GTP + H2O = GDP + phosphate + H(+). In terms of biological role, tubulin is the major constituent of microtubules, a cylinder consisting of laterally associated linear protofilaments composed of alpha- and beta-tubulin heterodimers. Microtubules grow by the addition of GTP-tubulin dimers to the microtubule end, where a stabilizing cap forms. Below the cap, tubulin dimers are in GDP-bound state, owing to GTPase activity of alpha-tubulin. The polypeptide is Tubulin alpha-2 chain (TUBA2) (Eleusine indica (Goosegrass)).